The chain runs to 243 residues: UPF0758 protein Ava_0172 (243 aa).

The MPN domain occupies 113 to 235; it reads PIDSPVAAVA…HQSLREVTTL (123 aa). 3 residues coordinate Zn(2+): His184, His186, and Asp197. Residues 184–197 carry the JAMM motif motif; sequence HNHPSGNVEPSPED.

This sequence belongs to the UPF0758 family.

This chain is UPF0758 protein Ava_0172, found in Trichormus variabilis (strain ATCC 29413 / PCC 7937) (Anabaena variabilis).